The sequence spans 793 residues: Vacuolar transporter chaperone complex subunit 4 (793 aa).

Topologically, residues 1 to 684 (MPFSKAWRSA…MVKWAEQATR (684 aa)) are cytoplasmic. ATP contacts are provided by lysine 215, arginine 286, arginine 288, lysine 312, lysine 325, and arginine 391. Glutamate 441 is a Mn(2+) binding site. The active site involves lysine 473. The tract at residues 575–595 (SVAPTMSPTDRPPSDEKKLTE) is disordered. A compositionally biased stretch (basic and acidic residues) spans 586-595 (PPSDEKKLTE). The helical transmembrane segment at 685–705 (VGVVGLAVIRFGNSMSLPNDM) threads the bilayer. The Vacuolar segment spans residues 706–717 (VAVHSFWRANFH). The chain crosses the membrane as a helical span at residues 718-738 (IVLGSLMVVVAECVLVYAYVT). At 739–760 (FKSRSRRVYARRKIRYDDRRGP) the chain is on the cytoplasmic side. The chain crosses the membrane as a helical span at residues 761–781 (VALTFVILAVILITVMMHVMV). Topologically, residues 782–793 (RYGPMLTGSDTF) are vacuolar.

Belongs to the VTC4 family. As to quaternary structure, the VTC core complex is an integral membrane heterooligomer composed of at least the catalytic subunit vtc4 and the accessory subunits vtc1 and vtc2. vtc1 is a small membrane protein without hydrophilic domain. Vtc2 and vtc4 are related and have 2 hydrophilic domains that face the cytosol, an N-terminal SPX domain and the central core domain. The central core in vtc4 is the catalytic domain. The cofactor is Mn(2+).

The protein resides in the acidocalcisome membrane. It catalyses the reaction [phosphate](n) + ATP = [phosphate](n+1) + ADP. With respect to regulation, activity of the enzyme is Mn(2+)-dependent and enhanced in the presence of pyrophosphate (PPi). Functionally, component of a polyphosphate synthase complex that utilizes ATP to synthesize and translocate polyphosphate to acidocalcisomes in epimastigotes, insect-stages of Trypanosoma brucei. Catalytic subunit of the vacuolar transporter chaperone (VTC) complex. The VTC complex acts as a vacuolar polyphosphate polymerase that catalyzes the synthesis of inorganic polyphosphate (polyP) via transfer of phosphate from ATP to a growing polyP chain, releasing ADP. VTC exposes its catalytic domain vtc4 to the cytosol, where the growing polyP chain winds through a tunnel-shaped pocket, integrating cytoplasmic polymer synthesis with polyP membrane translocation. The VTC complex carries 9 vacuolar transmembrane domains, which are likely to constitute the translocation channel into the organelle lumen. PolyP synthesis is tightly coupled to its transport into the vacuole lumen, in order to avoid otherwise toxic intermediates in the cytosol, and it depends on the proton gradient across the membrane, formed by V-ATPase. The VTC complex also plays a role in vacuolar membrane fusion. Essential for infection and parasite survival in the mammalian host. This Trypanosoma brucei brucei (strain 927/4 GUTat10.1) protein is Vacuolar transporter chaperone complex subunit 4 (vtc4).